The primary structure comprises 369 residues: MNASQRVRVAVVFGGRSNEHAISCVSAGSILRNLDPRRFEVVAIGITPQGSWVLTDGDPAALAISDRQLPEVTSASGTELALPADPGRSGQLVSLPPGASEVLASVDVVFPVLHGPYGEDGTIQGLLELAGVPYVGAGVFASAAGMDKEFTKKLFAAEGLPIGDYAVLRPSQSTLSLQDRERLGLPVFVKPARGGSSIGVSRVSSWDELDAAVAAARDHDPKVIVEAAIAGRELECGVLEMPDGTVQASTVGEIRVAGVRGREDSFYDFATKYLDDTAELDVPAKVDDEIADAVRELAIRAFKAVDCQGLARVDFFLTETGPVLNEINTMPGFTTISMYPRMWAASGVDYPSLLATMVETALTRGVGLR.

An ATP-grasp domain is found at 152 to 359; it reads KKLFAAEGLP…YPSLLATMVE (208 aa). 180-235 is a binding site for ATP; sequence RERLGLPVFVKPARGGSSIGVSRVSSWDELDAAVAAARDHDPKVIVEAAIAGRELE. Residues D314, E326, and N328 each contribute to the Mg(2+) site.

This sequence belongs to the D-alanine--D-alanine ligase family. The cofactor is Mg(2+). Mn(2+) serves as cofactor.

It is found in the cytoplasm. The catalysed reaction is 2 D-alanine + ATP = D-alanyl-D-alanine + ADP + phosphate + H(+). It functions in the pathway cell wall biogenesis; peptidoglycan biosynthesis. Functionally, cell wall formation. This Mycobacterium avium (strain 104) protein is D-alanine--D-alanine ligase.